The following is a 589-amino-acid chain: Malto-oligosyltrehalose trehalohydrolase (589 aa).

256–261 serves as a coordination point for substrate; the sequence is GFDAVH. The active-site Nucleophile is Asp258. Glu295 acts as the Proton donor in catalysis. Residues 320-324 and 390-395 contribute to the substrate site; these read DDFHT and HDQIGN.

Belongs to the glycosyl hydrolase 13 family.

It is found in the cytoplasm. It catalyses the reaction hydrolysis of (1-&gt;4)-alpha-D-glucosidic linkage in 4-alpha-D-[(1-&gt;4)-alpha-D-glucanosyl]n trehalose to yield trehalose and (1-&gt;4)-alpha-D-glucan.. It participates in glycan biosynthesis; trehalose biosynthesis. This is Malto-oligosyltrehalose trehalohydrolase (treZ) from Brevibacterium helvolum.